The following is a 970-amino-acid chain: Glycine dehydrogenase (decarboxylating) (970 aa).

Residue lysine 723 is modified to N6-(pyridoxal phosphate)lysine.

This sequence belongs to the GcvP family. As to quaternary structure, the glycine cleavage system is composed of four proteins: P, T, L and H. Pyridoxal 5'-phosphate is required as a cofactor.

The catalysed reaction is N(6)-[(R)-lipoyl]-L-lysyl-[glycine-cleavage complex H protein] + glycine + H(+) = N(6)-[(R)-S(8)-aminomethyldihydrolipoyl]-L-lysyl-[glycine-cleavage complex H protein] + CO2. Its function is as follows. The glycine cleavage system catalyzes the degradation of glycine. The P protein binds the alpha-amino group of glycine through its pyridoxal phosphate cofactor; CO(2) is released and the remaining methylamine moiety is then transferred to the lipoamide cofactor of the H protein. The chain is Glycine dehydrogenase (decarboxylating) from Burkholderia pseudomallei (strain 1106a).